Consider the following 654-residue polypeptide: Coiled-coil domain-containing protein 30 (654 aa).

The tract at residues 38 to 65 (TLESRRDPNSSLQKEFPQHQDEDQSRAA) is disordered. The span at 53-62 (FPQHQDEDQS) shows a compositional bias: basic and acidic residues. Coiled coils occupy residues 97-244 (REER…LDNA) and 276-559 (KSQQ…QIIR). The interval 614–654 (AAAIPKSPEPLSRSQDSESGYINVTSLKETHNTQGDQKPEL) is disordered. The span at 625–654 (SRSQDSESGYINVTSLKETHNTQGDQKPEL) shows a compositional bias: polar residues.

It belongs to the prefoldin subunit beta family.

The chain is Coiled-coil domain-containing protein 30 (Ccdc30) from Mus musculus (Mouse).